Reading from the N-terminus, the 38-residue chain is Photosystem II reaction center protein L (38 aa).

A helical membrane pass occupies residues 17–37; sequence SLYWGLLLIFVLAVLFSSYIF.

The protein belongs to the PsbL family. In terms of assembly, PSII is composed of 1 copy each of membrane proteins PsbA, PsbB, PsbC, PsbD, PsbE, PsbF, PsbH, PsbI, PsbJ, PsbK, PsbL, PsbM, PsbT, PsbY, PsbZ, Psb30/Ycf12, at least 3 peripheral proteins of the oxygen-evolving complex and a large number of cofactors. It forms dimeric complexes.

The protein localises to the plastid. The protein resides in the chloroplast thylakoid membrane. In terms of biological role, one of the components of the core complex of photosystem II (PSII). PSII is a light-driven water:plastoquinone oxidoreductase that uses light energy to abstract electrons from H(2)O, generating O(2) and a proton gradient subsequently used for ATP formation. It consists of a core antenna complex that captures photons, and an electron transfer chain that converts photonic excitation into a charge separation. This subunit is found at the monomer-monomer interface and is required for correct PSII assembly and/or dimerization. This is Photosystem II reaction center protein L from Euglena gracilis.